A 220-amino-acid polypeptide reads, in one-letter code: DNA mismatch repair protein MutH (220 aa).

The protein belongs to the MutH family.

Its subcellular location is the cytoplasm. Functionally, sequence-specific endonuclease that cleaves unmethylated GATC sequences. It is involved in DNA mismatch repair. The polypeptide is DNA mismatch repair protein MutH (Buchnera aphidicola subsp. Baizongia pistaciae (strain Bp)).